A 263-amino-acid polypeptide reads, in one-letter code: 4-hydroxy-2-oxo-heptane-1,7-dioate aldolase (263 aa).

His45 serves as the catalytic Proton acceptor. Gln147 serves as a coordination point for substrate. An a divalent metal cation-binding site is contributed by Glu149. Substrate contacts are provided by Ala174 and Asp175. Asp175 contributes to the a divalent metal cation binding site.

The protein belongs to the HpcH/HpaI aldolase family. As to quaternary structure, homohexamer; trimer of dimers. A divalent metal cation serves as cofactor.

It carries out the reaction 4-hydroxy-2-oxoheptanedioate = succinate semialdehyde + pyruvate. The protein operates within aromatic compound metabolism; 4-hydroxyphenylacetate degradation; pyruvate and succinate semialdehyde from 4-hydroxyphenylacetate: step 7/7. Catalyzes the reversible retro-aldol cleavage of 4-hydroxy-2-ketoheptane-1,7-dioate (HKHD) to pyruvate and succinic semialdehyde. This chain is 4-hydroxy-2-oxo-heptane-1,7-dioate aldolase, found in Salmonella dublin (strain CT_02021853).